The following is a 370-amino-acid chain: NSFL1 cofactor p47 (370 aa).

Residues Ser54–Thr73 are disordered. Ser74, Ser102, Ser114, and Ser140 each carry phosphoserine. Disordered regions lie at residues His80 to Asn116 and Thr138 to Leu157. The short motif at Pro109–Pro115 is the Nuclear localization signal element. Tyr167 bears the Phosphotyrosine mark. Residues Arg172–His175 carry the Nuclear localization signal motif. 3 positions are modified to phosphoserine: Ser176, Ser192, and Ser272. The SEP domain occupies Asp179–Val244. The UBX domain maps to Glu291–Arg368.

The protein belongs to the NSFL1C family. As to quaternary structure, part of a ternary complex containing STX5A, NSFL1C and VCP. NSFL1C forms a homotrimer that binds to one end of a VCP homohexamer. The complex binds to membranes enriched in phosphatidylethanolamine-containing lipids and promotes Golgi membrane fusion. Interaction with VCIP135 leads to dissociation of the complex via ATP hydrolysis by VCP. Binds ubiquitin and mono-ubiquitinated proteins via its N-terminal UBA-like domain when bound to VCP. Post-translationally, phosphorylated during mitosis. Phosphorylation inhibits interaction with Golgi membranes and is required for the fragmentation of the Golgi stacks during mitosis.

The protein localises to the nucleus. The protein resides in the golgi apparatus. Its subcellular location is the golgi stack. It localises to the chromosome. It is found in the cytoplasm. The protein localises to the cytoskeleton. The protein resides in the microtubule organizing center. Its subcellular location is the centrosome. In terms of biological role, reduces the ATPase activity of VCP. Necessary for the fragmentation of Golgi stacks during mitosis and for VCP-mediated reassembly of Golgi stacks after mitosis. May play a role in VCP-mediated formation of transitional endoplasmic reticulum (tER). Inhibits the activity of CTSL (in vitro). Together with UBXN2B/p37, regulates the centrosomal levels of kinase AURKA/Aurora A during mitotic progression by promoting AURKA removal from centrosomes in prophase. Also, regulates spindle orientation during mitosis. This chain is NSFL1 cofactor p47 (Nsfl1c), found in Mus musculus (Mouse).